We begin with the raw amino-acid sequence, 272 residues long: Tryptophan synthase alpha chain (272 aa).

Catalysis depends on proton acceptor residues Glu49 and Asp60.

It belongs to the TrpA family. As to quaternary structure, tetramer of two alpha and two beta chains.

It catalyses the reaction (1S,2R)-1-C-(indol-3-yl)glycerol 3-phosphate + L-serine = D-glyceraldehyde 3-phosphate + L-tryptophan + H2O. Its pathway is amino-acid biosynthesis; L-tryptophan biosynthesis; L-tryptophan from chorismate: step 5/5. Functionally, the alpha subunit is responsible for the aldol cleavage of indoleglycerol phosphate to indole and glyceraldehyde 3-phosphate. The protein is Tryptophan synthase alpha chain of Hydrogenovibrio crunogenus (strain DSM 25203 / XCL-2) (Thiomicrospira crunogena).